The sequence spans 387 residues: Major outer membrane porin (387 aa).

Positions 1–22 (MKKLLKSVLAFAVLGSASSLHA) are cleaved as a signal peptide.

It belongs to the chlamydial porin (CP) (TC 1.B.2) family. In terms of assembly, part of a disulfide cross-linked outer membrane complex (COMC) composed of the major outer membrane porin (MOMP), the small cysteine-rich protein (OmcA) and the large cysteine-rich periplasmic protein (OmcB).

The protein localises to the cell outer membrane. Functionally, in elementary bodies (EBs, the infectious stage, which is able to survive outside the host cell) provides the structural integrity of the outer envelope through disulfide cross-links with the small cysteine-rich protein and the large cysteine-rich periplasmic protein. It has been described in publications as the Sarkosyl-insoluble COMC (Chlamydia outer membrane complex), and serves as the functional equivalent of peptidoglycan. In terms of biological role, permits diffusion of specific solutes through the outer membrane. This Chlamydia muridarum (strain MoPn / Nigg) protein is Major outer membrane porin (ompA).